The primary structure comprises 619 residues: Probable pectinesterase/pectinesterase inhibitor 25 (619 aa).

The N-terminal stretch at 1–23 (MKMQTLNFTSSLLFLSFIFLSCA) is a signal peptide. The disordered stretch occupies residues 31–84 (SPSQPHSEPPSQLPFEPPVESPFFPPSQPPIFVPPSQPPSLPPSQSQSPSLACK). The span at 37–72 (SEPPSQLPFEPPVESPFFPPSQPPIFVPPSQPPSLP) shows a compositional bias: pro residues. Residues 73–231 (PSQSQSPSLA…TRLYSISLGL (159 aa)) form a pectinesterase inhibitor 25 region. Asn220, Asn255, Asn312, Asn325, and Asn364 each carry an N-linked (GlcNAc...) asparagine glycan. The tract at residues 302–601 (AVIVGPFKSD…FTVYNFTMGD (300 aa)) is pectinesterase 25. Thr380 is a binding site for substrate. An N-linked (GlcNAc...) asparagine glycan is attached at Asn382. Residue Gln410 participates in substrate binding. The Proton donor; for pectinesterase activity role is filled by Asp433. Residues Cys447 and Cys467 are joined by a disulfide bond. Asp454 (nucleophile; for pectinesterase activity) is an active-site residue. N-linked (GlcNAc...) asparagine glycosylation occurs at Asn500. Substrate contacts are provided by Arg522 and Trp524. N-linked (GlcNAc...) asparagine glycosylation is found at Asn550, Asn591, and Asn596.

This sequence in the N-terminal section; belongs to the PMEI family. In the C-terminal section; belongs to the pectinesterase family. Expressed in siliques.

Its subcellular location is the secreted. It localises to the cell wall. The catalysed reaction is [(1-&gt;4)-alpha-D-galacturonosyl methyl ester](n) + n H2O = [(1-&gt;4)-alpha-D-galacturonosyl](n) + n methanol + n H(+). It functions in the pathway glycan metabolism; pectin degradation; 2-dehydro-3-deoxy-D-gluconate from pectin: step 1/5. Functionally, acts in the modification of cell walls via demethylesterification of cell wall pectin. The protein is Probable pectinesterase/pectinesterase inhibitor 25 (PME25) of Arabidopsis thaliana (Mouse-ear cress).